A 415-amino-acid polypeptide reads, in one-letter code: Lipid II:glycine glycyltransferase (415 aa).

Belongs to the FemABX family.

It is found in the cytoplasm. It carries out the reaction beta-D-GlcNAc-(1-&gt;4)-Mur2Ac(oyl-L-Ala-D-isoglutaminyl-L-Lys-D-Ala-D-Ala)-di-trans,octa-cis-undecaprenyl diphosphate + glycyl-tRNA(Gly) = beta-D-GlcNAc-(1-&gt;4)-Mur2Ac(oyl-L-Ala-D-isoglutaminyl-L-Lys-(N(6)-Gly)-D-Ala-D-Ala)-di-trans,octa-cis-undecaprenyl diphosphate + tRNA(Gly) + H(+). Catalyzes the incorporation of amino acid(s) into the interchain peptide bridge of peptidoglycan, using aminoacyl-tRNA as amino acid donor. This is Lipid II:glycine glycyltransferase (femX) from Staphylococcus saprophyticus subsp. saprophyticus (strain ATCC 15305 / DSM 20229 / NCIMB 8711 / NCTC 7292 / S-41).